We begin with the raw amino-acid sequence, 584 residues long: MGQNQFRWSNEQLREHVEIIDGTRSPHKLLKNATYLNSYIREWMQANIWIYDDRIIYVGEKLPEQLHECEVIDCDGKYVVPSYIEPHAHPYQLYNPETLANHAMQFGTTTFINDNLTLFFTLKREESFHLLDEFTKIPASMYWWCRFDGQTELQNGESLFNSEEIIKWLQHEAVLQGGELTAWPKLLHGDDEMLTWVQETKRLQKKVEGHFPGASEATLAKLKLLGTDCDHEAMTGQEALARLMQGYTVSLRNSSIRPDLEVLLKELLELGVKQFDRFIFTTDGSHPSFYENGMTNIMIATAIKKGIPVIDAYQMASYNIARYYNMEHIHGAIATGRIANINILESKENPVPTSVIAKGQWVKRDGVNTHEALHIDWSKCKVTPLSLEWSIEKEDMLFSNKTGIHLLNNVITKPYTSEINIDCDELSIDYDECFLMMIARDGTWRVNTVVKGFAKEIGGLASSYSGTGDIILVGKRKEDMLTAFHRIKELGGGMVIAEKNEVLHEIALPLLGIMSELKMSELIQKEKKMVNLLQERGYVYNDPAFTILFFSATHLPFIRVTFIGLYDVKSGKVVASPVNLIKQY.

This sequence belongs to the metallo-dependent hydrolases superfamily. Adenine deaminase family.

It catalyses the reaction adenine + H2O + H(+) = hypoxanthine + NH4(+). The chain is Putative adenine deaminase BA_3032/GBAA_3032/BAS2818 from Bacillus anthracis.